The primary structure comprises 313 residues: MNQYPAERIARARVLVVGDVMLDRYWFGEVDRISPEAPVPVVRVARREDRLGGAANVARNVAALGAQVTLIGVVGADEVGHRIERMAAEEGVRTDLVSDTEHPTTLKMRVLGRQQQLLRVDFEQHPEPAALDGISAAVARQLAQHDIVVLSDYAKGVLDRVESIIAAAVGHSLPVLVDPKGDHYERYRGATLVTPNRAEMREAVGRWKTEDELAERAQRLRLDLDLEALLVTRSEQGMTLFTDAGRDHADAAAHEVYDVSGAGDTVLATLAVMRAVGLSWGDAMRWANRAGGIVVGKLGTSVVTAAELAGEST.

196-199 (NRAE) is an ATP binding site. D264 is a catalytic residue.

It carries out the reaction D-glycero-beta-D-manno-heptose 7-phosphate + ATP = D-glycero-beta-D-manno-heptose 1,7-bisphosphate + ADP + H(+). It participates in nucleotide-sugar biosynthesis; ADP-L-glycero-beta-D-manno-heptose biosynthesis; ADP-L-glycero-beta-D-manno-heptose from D-glycero-beta-D-manno-heptose 7-phosphate: step 1/4. It functions in the pathway bacterial outer membrane biogenesis; LPS core biosynthesis. Catalyzes the phosphorylation of D-glycero-D-manno-heptose 7-phosphate at the C-1 position to selectively form D-glycero-beta-D-manno-heptose-1,7-bisphosphate. The polypeptide is D-beta-D-heptose 7-phosphate kinase (rfaE) (Bordetella bronchiseptica (strain ATCC BAA-588 / NCTC 13252 / RB50) (Alcaligenes bronchisepticus)).